The sequence spans 430 residues: Glutamate-1-semialdehyde 2,1-aminomutase (430 aa).

Position 267 is an N6-(pyridoxal phosphate)lysine (Lys267).

This sequence belongs to the class-III pyridoxal-phosphate-dependent aminotransferase family. HemL subfamily. Homodimer. It depends on pyridoxal 5'-phosphate as a cofactor.

The protein resides in the cytoplasm. It catalyses the reaction (S)-4-amino-5-oxopentanoate = 5-aminolevulinate. It functions in the pathway porphyrin-containing compound metabolism; protoporphyrin-IX biosynthesis; 5-aminolevulinate from L-glutamyl-tRNA(Glu): step 2/2. This is Glutamate-1-semialdehyde 2,1-aminomutase from Natranaerobius thermophilus (strain ATCC BAA-1301 / DSM 18059 / JW/NM-WN-LF).